The primary structure comprises 64 residues: Frontoxin V (64 aa).

5 disulfides stabilise this stretch: Cys-3–Cys-24, Cys-6–Cys-11, Cys-17–Cys-41, Cys-45–Cys-57, and Cys-58–Cys-63.

Expressed by the venom gland.

Its subcellular location is the secreted. Functionally, produces peripheral paralysis by blocking neuromuscular transmission at the postsynaptic site. Binds to the muscular nicotinic acetylcholine receptor (nAChR). The polypeptide is Frontoxin V (Micrurus frontalis (Coral snake)).